A 106-amino-acid chain; its full sequence is MTTEKIAFRMFLNPGCEAEYQLRHDRIWPELVALLKNSGVSDYSIFLDEPRGVLFAVLSRSPGHTMQTLPQHPVMQRWWQHMKDIMRCNPDGSPVAEPLPCLFHLD.

Tyrosine 20 is a substrate binding site. Histidine 24 (proton donor) is an active-site residue. Residues tyrosine 43 and 78–79 (WW) contribute to the substrate site.

It belongs to the rhamnose mutarotase family. As to quaternary structure, homodimer.

It localises to the cytoplasm. It carries out the reaction alpha-L-rhamnose = beta-L-rhamnose. It participates in carbohydrate metabolism; L-rhamnose metabolism. Its function is as follows. Involved in the anomeric conversion of L-rhamnose. In Leptothrix cholodnii (strain ATCC 51168 / LMG 8142 / SP-6) (Leptothrix discophora (strain SP-6)), this protein is L-rhamnose mutarotase.